The chain runs to 414 residues: Protein SOSEKI 2 (414 aa).

Positions 44–135 (RRVQVVYYLT…YVLKGSEITD (92 aa)) are DIX-like oligomerization domain. Residues 171–273 (SFDDAELYVG…GDPVEPGSGR (103 aa)) are disordered. Positions 173–192 (DDAELYVGEEEEEEDGEYEL) are enriched in acidic residues. Positions 205-229 (PQSRCSRGVSTETMESTEQKPNLTK) are enriched in polar residues. The span at 230–242 (TEQDLQVRSDSSD) shows a compositional bias: basic and acidic residues. The Association to cell membranes motif lies at 283-284 (CG).

Belongs to the SOSEKI family. As to quaternary structure, homodimer. Forms long polymer filaments with other SOKs proteins polymers (e.g. SOK1, SOK2, SOK3 and SOK4) crucial for polar localization and biological activity. Binds to ANGUSTIFOLIA (AN). In terms of tissue distribution, expressed during embryogenesis and in roots.

Its subcellular location is the cell membrane. Part of a three-gene cluster containing FLC, UFC and DFC, which is coordinately regulated in response to vernalization. Also regulated by FLX. SOSEKI proteins (SOK1-5) locally interpret global polarity cues and can influence cell division orientation to coordinate cell polarization relative to body axes, probably by guiding ANGUSTIFOLIA (AN) polarized localization. In Arabidopsis thaliana (Mouse-ear cress), this protein is Protein SOSEKI 2.